Here is a 494-residue protein sequence, read N- to C-terminus: Leucine-rich repeat extensin-like protein 4 (494 aa).

The N-terminal stretch at 1–25 (MKNNTTQSLLLLLLFFFFFFEISHS) is a signal peptide. Asn-60, Asn-94, and Asn-106 each carry an N-linked (GlcNAc...) asparagine glycan. LRR repeat units follow at residues 121–145 (IRTVAGIDLNHADIAGYLPEELGLL), 146–168 (TDLALFHVNSNRFCGTVPHKFKQ), 169–193 (LKLLFELDLSNNRFAGKFPTVVLHL), 194–217 (PSLKFLDLRFNEFEGTVPKELFSK), 219–240 (LDAIFINHNRFRFELPENFGDS), 242–263 (VSVIVLANNHFHGCIPTSLVEM), 264–287 (KNLNEIIFMNNGLNSCLPADIGRL), 289–311 (NVTVFDVSFNELVGPLPESVGGM), and 312–335 (VEVEQLNVAHNLLSGKIPASICQL). Residue Asn-289 is glycosylated (N-linked (GlcNAc...) asparagine). Asn-340 is a glycosylation site (N-linked (GlcNAc...) asparagine). Positions 404-494 (SPPIVALPPP…YASPPPPPFY (91 aa)) are contains the Ser-Pro(4) repeats. The segment covering 422–479 (PPVYSPPPSPPVFSPPPSPPVYSPPPPPSIHYSSPPPPPVHHSSPPPPSPEFEGPLPP) has biased composition (pro residues). Residues 422–482 (PPVYSPPPSP…FEGPLPPVIG (61 aa)) form a disordered region.

Hydroxylated on proline residues in the S-P-P-P-P repeat. In terms of processing, O-glycosylated on hydroxyprolines. Expressed in roots, stems, leaves and flowers, mostly in vascular tissues.

It localises to the secreted. It is found in the cell wall. Its function is as follows. Modulates cell morphogenesis by regulating cell wall formation and assembly, and/or growth polarization. The polypeptide is Leucine-rich repeat extensin-like protein 4 (LRX4) (Arabidopsis thaliana (Mouse-ear cress)).